The following is a 92-amino-acid chain: Small ribosomal subunit protein uS19 (92 aa).

It belongs to the universal ribosomal protein uS19 family.

Protein S19 forms a complex with S13 that binds strongly to the 16S ribosomal RNA. The sequence is that of Small ribosomal subunit protein uS19 from Desulfatibacillum aliphaticivorans.